A 552-amino-acid polypeptide reads, in one-letter code: Urocanate hydratase (552 aa).

NAD(+)-binding positions include 49–50 (GG), Gln-127, 173–175 (GMG), Asp-193, 239–240 (NA), 260–264 (QTSAH), 270–271 (YI), and Tyr-319. Cys-407 is a catalytic residue. Gly-489 lines the NAD(+) pocket.

It belongs to the urocanase family. NAD(+) is required as a cofactor.

Its subcellular location is the cytoplasm. The enzyme catalyses 4-imidazolone-5-propanoate = trans-urocanate + H2O. It participates in amino-acid degradation; L-histidine degradation into L-glutamate; N-formimidoyl-L-glutamate from L-histidine: step 2/3. Its function is as follows. Catalyzes the conversion of urocanate to 4-imidazolone-5-propionate. This chain is Urocanate hydratase, found in Bacillus cereus (strain AH187).